We begin with the raw amino-acid sequence, 440 residues long: Amino acid transporter AVT6D (440 aa).

A run of 11 helical transmembrane segments spans residues 26-46 (FAGA…MAIP), 47-67 (AAFK…IAWL), 102-122 (AVTV…SIII), 149-169 (WNTR…PLVL), 182-202 (ISFL…IIAL), 219-239 (GGLS…AFTF), 262-282 (ISVI…YLLF), 309-329 (IVRL…NFSL), 356-376 (FPLL…WYFF), 377-397 (QFLG…AIVL), and 410-430 (IVAS…ISTN).

The protein belongs to the amino acid/polyamine transporter 2 family. Amino acid/auxin permease (AAAP) (TC 2.A.18.6) subfamily.

Its subcellular location is the membrane. The chain is Amino acid transporter AVT6D from Arabidopsis thaliana (Mouse-ear cress).